We begin with the raw amino-acid sequence, 436 residues long: Probable sodium/metabolite cotransporter BASS4, chloroplastic (436 aa).

The transit peptide at 1 to 47 directs the protein to the chloroplast; sequence MAIASTLASTQNPFLCLRQPPSPGNRSVVFRRCQDPCGRRWISRSIR. Helical transmembrane passes span 109–129, 131–151, 157–177, 195–215, 225–245, 257–277, 297–314, 328–348, and 403–423; these read FLPLALVSGVGLGFANPTLGC, ADKYSFTKISTCGIFIISGLT, IGAAVKGWPLGLFGLISILLL, LVTGLGIFCCMPTTLSSGVAL, LALAVTVASNLLGILTIPFWV, FPTDQLFRSLIVTLLIPLIIG, LFSKINAICLSLVPWIQV, VFLAAVGIGILLHLSLLAFNA, and PCVAAHLNQIMIDSVLVNLWL.

The protein belongs to the bile acid:sodium symporter (BASS) (TC 2.A.28) family.

The protein localises to the membrane. Its subcellular location is the plastid. It is found in the chloroplast envelope. May function as sodium-coupled metabolite transporter across the chloroplast envelope. The polypeptide is Probable sodium/metabolite cotransporter BASS4, chloroplastic (BASS4) (Arabidopsis thaliana (Mouse-ear cress)).